The chain runs to 94 residues: Small polypeptide ROTUNDIFOLIA LIKE 1 (94 aa).

Positions 1-13 are enriched in polar residues; sequence MRQCASASSSTSR. The disordered stretch occupies residues 1–26; the sequence is MRQCASASSSTSRPPEAAGEEGKRRR. The segment at 28–59 is required for DVL/RTFL small polypeptide activity; it reads RRGWLLQAAAREQRSRFYIFRRCVAMLLCWYK. A helical membrane pass occupies residues 63–82; the sequence is ITPYNVVPLGIYGLVWFATM.

The protein belongs to the DVL/RTFL small polypeptides family.

Its subcellular location is the cell membrane. In terms of biological role, small polypeptide acting as a regulatory molecule which coordinates cellular responses required for differentiation, growth and development, probably by restricting polar cell proliferation in lateral organs. This is Small polypeptide ROTUNDIFOLIA LIKE 1 from Oryza sativa subsp. japonica (Rice).